The sequence spans 508 residues: Maturase K (508 aa).

The protein belongs to the intron maturase 2 family. MatK subfamily.

Its subcellular location is the plastid. It localises to the chloroplast. Usually encoded in the trnK tRNA gene intron. Probably assists in splicing its own and other chloroplast group II introns. The chain is Maturase K from Abrus precatorius (Indian licorice).